The following is a 395-amino-acid chain: Succinyl-diaminopimelate desuccinylase 2 (395 aa).

Position 79 (histidine 79) interacts with Zn(2+). Aspartate 81 is a catalytic residue. Aspartate 112 provides a ligand contact to Zn(2+). Glutamate 145 serves as the catalytic Proton acceptor. Zn(2+)-binding residues include glutamate 146, glutamate 174, and histidine 363.

This sequence belongs to the peptidase M20A family. DapE subfamily. Homodimer. The cofactor is Zn(2+). Co(2+) serves as cofactor.

The catalysed reaction is N-succinyl-(2S,6S)-2,6-diaminopimelate + H2O = (2S,6S)-2,6-diaminopimelate + succinate. Its pathway is amino-acid biosynthesis; L-lysine biosynthesis via DAP pathway; LL-2,6-diaminopimelate from (S)-tetrahydrodipicolinate (succinylase route): step 3/3. In terms of biological role, catalyzes the hydrolysis of N-succinyl-L,L-diaminopimelic acid (SDAP), forming succinate and LL-2,6-diaminopimelate (DAP), an intermediate involved in the bacterial biosynthesis of lysine and meso-diaminopimelic acid, an essential component of bacterial cell walls. The sequence is that of Succinyl-diaminopimelate desuccinylase 2 from Ruegeria sp. (strain TM1040) (Silicibacter sp.).